The sequence spans 555 residues: MHLVRWLICLIQLWIQLGAAGSVTLLDPLLIEIPNGKLRGRDNGHYYSYEAIPYAEPPTGELRFEVPKPYKQQWTNTFDATQPPVLCMQWNQFINGTNKLLGVEDCLTVSVYRPKNSSRNNFPVVANLHGGAFMFGGPSQYGHENIMREGSVILVTIGYRLGPLGFVSTGDADLSGNFGLKDQRLALLWIKQNIASFGGEPENILVVGHSAGGASVHLQMLREDFSKVAKAAISFSGNALDPWVIQQGLRGRTFELGRIVGCGQASDSVTLKKCLKSKPASEIVSAVQSFLVFSYVPFTPFGPAIESPDAPEAFITQHPIDIIKSGKFAQVPWAVTYTTEDGGYNAALLLEKQASSGRELILDLNDRWFDWAPYLLFYRDSMTTIKDMDDYSRKLRQEYLGDRRFSVESYWDVQRMFTDLLFKNSVTVSVDLHRKYGKSPVYAFVYDNPAEVGVGQILSGRNDVYFGTVHGDDVFLIFNVSFVPANRRPDEQIISRNFIKMLEYFALSTNDTMAYGDCVFQNNVGSKHMQLLSITRDGCENKQLNCFIQRCLIFF.

Positions 1-19 (MHLVRWLICLIQLWIQLGA) are cleaved as a signal peptide. A disulfide bond links C87 and C106. 2 N-linked (GlcNAc...) asparagine glycosylation sites follow: N95 and N116. The active-site Acyl-ester intermediate is S210. Residues C262 and C274 are joined by a disulfide bond. N479 and N510 each carry an N-linked (GlcNAc...) asparagine glycan. A disulfide bridge connects residues C518 and C539.

The protein belongs to the type-B carboxylesterase/lipase family.

Its subcellular location is the secreted. The catalysed reaction is a carboxylic ester + H2O = an alcohol + a carboxylate + H(+). The protein is Esterase-5A (Est-5A) of Drosophila miranda (Fruit fly).